The primary structure comprises 125 residues: Probable 4-amino-4-deoxy-L-arabinose-phosphoundecaprenol flippase subunit ArnF (125 aa).

The Cytoplasmic segment spans residues 1–2 (MG). A helical membrane pass occupies residues 3–23 (VMWGLISVAIASLAQLSLGFA). Over 24–33 (MMRLPSIAHP) the chain is Periplasmic. The chain crosses the membrane as a helical span at residues 34-54 (LAFISGLGAFNAATLALFAGL). Topologically, residues 55 to 76 (AGYLVSVFCWQKTLHTLALSKA) are cytoplasmic. Residues 77–97 (YALLSLSYVLVWVASMLLPGL) form a helical membrane-spanning segment. The Periplasmic segment spans residues 98-100 (QGA). Residues 101-121 (FSLKAMLGVLCIMAGVMLIFL) traverse the membrane as a helical segment. Residues 122–125 (PARS) lie on the Cytoplasmic side of the membrane.

Belongs to the ArnF family. As to quaternary structure, heterodimer of ArnE and ArnF.

The protein localises to the cell inner membrane. It participates in bacterial outer membrane biogenesis; lipopolysaccharide biosynthesis. Translocates 4-amino-4-deoxy-L-arabinose-phosphoundecaprenol (alpha-L-Ara4N-phosphoundecaprenol) from the cytoplasmic to the periplasmic side of the inner membrane. The sequence is that of Probable 4-amino-4-deoxy-L-arabinose-phosphoundecaprenol flippase subunit ArnF from Salmonella choleraesuis (strain SC-B67).